A 1435-amino-acid polypeptide reads, in one-letter code: Dicer-like protein 2 (1435 aa).

One can recognise a Helicase ATP-binding domain in the interval 54-234; sequence MLSESLRQNI…LEVLEINLNA (181 aa). 67–74 serves as a coordination point for ATP; that stretch reads MDTGSGKT. A DEAH box motif is present at residues 175-178; it reads DEAH. One can recognise a Helicase C-terminal domain in the interval 400 to 564; the sequence is KLIDFLVLEH…ENKRALEHIQ (165 aa). One can recognise a Dicer dsRNA-binding fold domain in the interval 591–684; the sequence is ARNHLSHFCG…MPAHHHIDDE (94 aa). 2 consecutive RNase III domains span residues 956 to 1099 and 1141 to 1323; these read ANEL…IDGG and LSEI…IDSQ. The Mg(2+) site is built by E1178, D1309, and E1312.

The protein belongs to the helicase family. Dicer subfamily. The cofactor is Mg(2+). Mn(2+) serves as cofactor.

Dicer-like endonuclease involved in cleaving double-stranded RNA in the RNA interference (RNAi) pathway. Produces 21 to 25 bp dsRNAs (siRNAs) which target the selective destruction of homologous RNAs leading to sequence-specific suppression of gene expression, called post-transcriptional gene silencing (PTGS). Part of a broad host defense response against viral infection and transposons. The polypeptide is Dicer-like protein 2 (DCL2) (Coccidioides immitis (strain RS) (Valley fever fungus)).